The following is a 720-amino-acid chain: DNA replication licensing factor mcm7-B (720 aa).

The segment at 183 to 210 (CDQCGAETYQPIQSPTFMPLIMCPSREC) adopts a C4-type zinc-finger fold. In terms of domain architecture, MCM spans 331-537 (FYEKLAASIA…NDLRLAQHIT (207 aa)). 8 residues coordinate ATP: tyrosine 344, glycine 383, alanine 385, lysine 386, serine 387, asparagine 488, arginine 513, and arginine 603. The Arginine finger signature appears at 512-515 (SRFD).

Belongs to the MCM family. As to quaternary structure, component of the mcm2-7 complex (RLF-M). The complex forms a toroidal hexameric ring with the proposed subunit order mcm2-mcm6-mcm4-mcm7-mcm3-mcm5. The heterodimer of mmcm3/mcm5 interacts with mcm4, mmcm6, mcm7 and weakly with mcm2. The N-terminus is required for interaction with mmcm3, though this interaction may not be direct, and remains in a complex with mmcm3 throughout the cell cycle. Begins to associate with zmcm6 at the neurula stage. Component of the replisome complex. Component of the CMG helicase complex, composed of the mcm2-7 complex, the GINS complex and cdc45. In terms of processing, ubiquitinated by traip when forks converge following formation of DNA interstrand cross-links. Short ubiquitin chains on mcm7 promote recruitment of DNA glycosylase neil3. If the interstrand cross-link cannot be cleaved by neil3, the ubiquitin chains continue to grow on mcm7, promoting the unloading of the CMG helicase complex by the vcp/p97 ATPase.

Its subcellular location is the nucleus. It is found in the chromosome. The enzyme catalyses ATP + H2O = ADP + phosphate + H(+). Acts as a component of the mcm2-7 complex (mcm complex) which is the putative replicative helicase essential for 'once per cell cycle' DNA replication initiation and elongation in eukaryotic cells. The active ATPase sites in the mcm2-7 ring are formed through the interaction surfaces of two neighboring subunits such that a critical structure of a conserved arginine finger motif is provided in trans relative to the ATP-binding site of the Walker A box of the adjacent subunit. The six ATPase active sites, however, are likely to contribute differentially to the complex helicase activity. The existence of maternal and zygotic forms of mcm3 and mcm6 suggests that specific forms of mcm2-7 complexes may be used during different stages of development. The polypeptide is DNA replication licensing factor mcm7-B (mcm7-b) (Xenopus laevis (African clawed frog)).